The following is a 345-amino-acid chain: Nicotinate-nucleotide--dimethylbenzimidazole phosphoribosyltransferase (345 aa).

The active-site Proton acceptor is E312.

Belongs to the CobT family.

It carries out the reaction 5,6-dimethylbenzimidazole + nicotinate beta-D-ribonucleotide = alpha-ribazole 5'-phosphate + nicotinate + H(+). Its pathway is nucleoside biosynthesis; alpha-ribazole biosynthesis; alpha-ribazole from 5,6-dimethylbenzimidazole: step 1/2. Functionally, catalyzes the synthesis of alpha-ribazole-5'-phosphate from nicotinate mononucleotide (NAMN) and 5,6-dimethylbenzimidazole (DMB). In Phocaeicola vulgatus (strain ATCC 8482 / DSM 1447 / JCM 5826 / CCUG 4940 / NBRC 14291 / NCTC 11154) (Bacteroides vulgatus), this protein is Nicotinate-nucleotide--dimethylbenzimidazole phosphoribosyltransferase.